The sequence spans 197 residues: CASP-like protein 1B2 (197 aa).

An N-acetylalanine modification is found at A2. At 2-17 (AREKIVVAGGTTKSWK) the chain is on the cytoplasmic side. The chain crosses the membrane as a helical span at residues 18 to 38 (LLLGLRIFAFMATLAAAIVMS). Residues 39–69 (LNKETKTLVVATIGTVPIKATLTAKFQHTPA) are Extracellular-facing. Residues 70-90 (FVFFVIANVMVSFHNLLMIVV) traverse the membrane as a helical segment. Residues 91–106 (QIFSRKLEYKGLRLLS) are Cytoplasmic-facing. Residues 107–127 (IAILDMLNATLVSAAANAAVF) traverse the membrane as a helical segment. At 128–156 (VAELGKNGNKHAKWNKVCDRFTTYCDHGA) the chain is on the extracellular side. Residues 157-177 (GAIIAAFAGVILMLLVSAVSI) form a helical membrane-spanning segment. The Cytoplasmic portion of the chain corresponds to 178 to 197 (SRLLINSKNFSTTATTTSVV).

This sequence belongs to the Casparian strip membrane proteins (CASP) family. As to quaternary structure, homodimer and heterodimers.

It is found in the cell membrane. The polypeptide is CASP-like protein 1B2 (Arabidopsis thaliana (Mouse-ear cress)).